A 61-amino-acid polypeptide reads, in one-letter code: Overexpressed in colon carcinoma 1 protein homolog (61 aa).

Positions 1 to 13 (MGCGNSTAASTTP) are enriched in polar residues. The interval 1–61 (MGCGNSTAAS…AGQTASTHKE (61 aa)) is disordered. A compositionally biased stretch (basic and acidic residues) spans 18 to 34 (SAKDVQDDSSMDEEKRR). Positions 48–61 (TNETAGQTASTHKE) are enriched in polar residues.

The protein belongs to the OCC1 family.

The polypeptide is Overexpressed in colon carcinoma 1 protein homolog (si:dkey-261e22.4) (Danio rerio (Zebrafish)).